Reading from the N-terminus, the 261-residue chain is Cytochrome c oxidase subunit 3 (261 aa).

The Mitochondrial matrix segment spans residues 1-15 (MTHQTHAYHMVNPSP). The helical transmembrane segment at 16 to 34 (WPLTGALSALLMTSGLIMW) threads the bilayer. Over 35-40 (FHFNST) the chain is Mitochondrial intermembrane. The chain crosses the membrane as a helical span at residues 41–66 (TLLMLGLTTNMLTMYQWWRDVIREST). Topologically, residues 67 to 72 (FQGHHT) are mitochondrial matrix. A helical membrane pass occupies residues 73–105 (PNVQKGLRYGMILFIISEVLFFTGFFWAFYHSS). Residues 106–128 (LAPTPELGGCWPPTGIHPLNPLE) are Mitochondrial intermembrane-facing. Residues 129-152 (VPLLNTSVLLASGVSITWAHHSLM) traverse the membrane as a helical segment. The Mitochondrial matrix segment spans residues 153–155 (EGN). Residues 156-183 (RNHMLQALFITIALGVYFTLLQASEYYE) form a helical membrane-spanning segment. The Mitochondrial intermembrane portion of the chain corresponds to 184–190 (APFTISD). A helical membrane pass occupies residues 191-223 (GVYGSTFFVATGFHGLHVIIGSTFLIVCFFRQL). The Mitochondrial matrix segment spans residues 224-232 (KFHFTSNHH). The chain crosses the membrane as a helical span at residues 233–256 (FGFEAAAWYWHFVDVVWLFLYVSI). At 257–261 (YWWGS) the chain is on the mitochondrial intermembrane side.

This sequence belongs to the cytochrome c oxidase subunit 3 family. Component of the cytochrome c oxidase (complex IV, CIV), a multisubunit enzyme composed of 14 subunits. The complex is composed of a catalytic core of 3 subunits MT-CO1, MT-CO2 and MT-CO3, encoded in the mitochondrial DNA, and 11 supernumerary subunits COX4I, COX5A, COX5B, COX6A, COX6B, COX6C, COX7A, COX7B, COX7C, COX8 and NDUFA4, which are encoded in the nuclear genome. The complex exists as a monomer or a dimer and forms supercomplexes (SCs) in the inner mitochondrial membrane with NADH-ubiquinone oxidoreductase (complex I, CI) and ubiquinol-cytochrome c oxidoreductase (cytochrome b-c1 complex, complex III, CIII), resulting in different assemblies (supercomplex SCI(1)III(2)IV(1) and megacomplex MCI(2)III(2)IV(2)).

The protein localises to the mitochondrion inner membrane. It catalyses the reaction 4 Fe(II)-[cytochrome c] + O2 + 8 H(+)(in) = 4 Fe(III)-[cytochrome c] + 2 H2O + 4 H(+)(out). In terms of biological role, component of the cytochrome c oxidase, the last enzyme in the mitochondrial electron transport chain which drives oxidative phosphorylation. The respiratory chain contains 3 multisubunit complexes succinate dehydrogenase (complex II, CII), ubiquinol-cytochrome c oxidoreductase (cytochrome b-c1 complex, complex III, CIII) and cytochrome c oxidase (complex IV, CIV), that cooperate to transfer electrons derived from NADH and succinate to molecular oxygen, creating an electrochemical gradient over the inner membrane that drives transmembrane transport and the ATP synthase. Cytochrome c oxidase is the component of the respiratory chain that catalyzes the reduction of oxygen to water. Electrons originating from reduced cytochrome c in the intermembrane space (IMS) are transferred via the dinuclear copper A center (CU(A)) of subunit 2 and heme A of subunit 1 to the active site in subunit 1, a binuclear center (BNC) formed by heme A3 and copper B (CU(B)). The BNC reduces molecular oxygen to 2 water molecules using 4 electrons from cytochrome c in the IMS and 4 protons from the mitochondrial matrix. This Antilope cervicapra (Blackbuck) protein is Cytochrome c oxidase subunit 3 (MT-CO3).